The chain runs to 206 residues: Large ribosomal subunit protein uL4 (206 aa).

Residues 51–76 (AKTRAEVSGGGIKPWRQKGTGRARQG) are disordered.

Belongs to the universal ribosomal protein uL4 family. In terms of assembly, part of the 50S ribosomal subunit.

In terms of biological role, one of the primary rRNA binding proteins, this protein initially binds near the 5'-end of the 23S rRNA. It is important during the early stages of 50S assembly. It makes multiple contacts with different domains of the 23S rRNA in the assembled 50S subunit and ribosome. Its function is as follows. Forms part of the polypeptide exit tunnel. This is Large ribosomal subunit protein uL4 from Clostridium kluyveri (strain ATCC 8527 / DSM 555 / NBRC 12016 / NCIMB 10680 / K1).